A 289-amino-acid chain; its full sequence is Small ribosomal subunit protein uS2C (289 aa).

Belongs to the universal ribosomal protein uS2 family. As to quaternary structure, component of the small ribosomal subunit. Mature ribosomes consist of a small (40S) and a large (60S) subunit. The 40S subunit contains about 33 different proteins and 1 molecule of RNA (18S). The 60S subunit contains about 49 different proteins and 3 molecules of RNA (25S, 5.8S and 5S). Interacts with rps21.

It localises to the cytoplasm. Functionally, required for the assembly and/or stability of the 40S ribosomal subunit. Required for the processing of the 20S rRNA-precursor to mature 18S rRNA in a late step of the maturation of 40S ribosomal subunits. This is Small ribosomal subunit protein uS2C (rps0c) from Schizosaccharomyces japonicus (strain yFS275 / FY16936) (Fission yeast).